Consider the following 257-residue polypeptide: Neurotrophin-3 (257 aa).

An N-terminal signal peptide occupies residues 1 to 18; it reads MSILFYVIFLAYLRGIQG. Residues 19-138 constitute a propeptide that is removed on maturation; it reads NNMDQRSLPE…VANRTSRRKR (120 aa). The disordered stretch occupies residues 61–81; sequence STLPKAEAPREPERGGPAKSA. Residues 67–76 show a composition bias toward basic and acidic residues; it reads EAPREPERGG. N-linked (GlcNAc...) asparagine glycosylation occurs at asparagine 131. 3 cysteine pairs are disulfide-bonded: cysteine 152/cysteine 217, cysteine 195/cysteine 246, and cysteine 205/cysteine 248.

Belongs to the NGF-beta family. As to expression, brain and peripheral tissues.

The protein localises to the secreted. Functionally, seems to promote the survival of visceral and proprioceptive sensory neurons. The sequence is that of Neurotrophin-3 (NTF3) from Homo sapiens (Human).